The sequence spans 628 residues: Biosynthetic arginine decarboxylase (628 aa).

Lysine 101 bears the N6-(pyridoxal phosphate)lysine mark. Position 281-291 (281-291 (VDVGGGLGVDY)) interacts with substrate.

Belongs to the Orn/Lys/Arg decarboxylase class-II family. SpeA subfamily. Mg(2+) serves as cofactor. It depends on pyridoxal 5'-phosphate as a cofactor.

The catalysed reaction is L-arginine + H(+) = agmatine + CO2. It participates in amine and polyamine biosynthesis; agmatine biosynthesis; agmatine from L-arginine: step 1/1. Catalyzes the biosynthesis of agmatine from arginine. The sequence is that of Biosynthetic arginine decarboxylase from Alkalilimnicola ehrlichii (strain ATCC BAA-1101 / DSM 17681 / MLHE-1).